The primary structure comprises 752 residues: Ribosomal RNA large subunit methyltransferase K/L (752 aa).

Positions 53–164 constitute a THUMP domain; the sequence is QMYKICLWTR…RDELHISIDL (112 aa).

This sequence belongs to the methyltransferase superfamily. RlmKL family.

It localises to the cytoplasm. It carries out the reaction guanosine(2445) in 23S rRNA + S-adenosyl-L-methionine = N(2)-methylguanosine(2445) in 23S rRNA + S-adenosyl-L-homocysteine + H(+). It catalyses the reaction guanosine(2069) in 23S rRNA + S-adenosyl-L-methionine = N(2)-methylguanosine(2069) in 23S rRNA + S-adenosyl-L-homocysteine + H(+). Its function is as follows. Specifically methylates the guanine in position 2445 (m2G2445) and the guanine in position 2069 (m7G2069) of 23S rRNA. This chain is Ribosomal RNA large subunit methyltransferase K/L, found in Saccharophagus degradans (strain 2-40 / ATCC 43961 / DSM 17024).